The primary structure comprises 237 residues: MEKREELYRGKAKSVYKTDDADRLILLFRNDTSAFDGKRIEQLDRKGMVNNKFNAFIMQKLEAAGIPTQFDKLLADNEVLVKKLDMIPVECVVRNYAAGSLVKRLGVEEGMKLNPYTFELFLKDDAKGDPFINESHVVAFGWGTAEQLARMKELSLKVNEVLSKLFDDAGLLLVDFKLEFGVFSDGSIVLGDEFSPDGCRLWDKDTKKKMDKDRFRQGLGDVIEAYEEVANRLGVPL.

Belongs to the SAICAR synthetase family.

It carries out the reaction 5-amino-1-(5-phospho-D-ribosyl)imidazole-4-carboxylate + L-aspartate + ATP = (2S)-2-[5-amino-1-(5-phospho-beta-D-ribosyl)imidazole-4-carboxamido]succinate + ADP + phosphate + 2 H(+). The protein operates within purine metabolism; IMP biosynthesis via de novo pathway; 5-amino-1-(5-phospho-D-ribosyl)imidazole-4-carboxamide from 5-amino-1-(5-phospho-D-ribosyl)imidazole-4-carboxylate: step 1/2. The protein is Phosphoribosylaminoimidazole-succinocarboxamide synthase of Pseudomonas fluorescens (strain Pf0-1).